The primary structure comprises 419 residues: UDP-N-acetylglucosamine 1-carboxyvinyltransferase (419 aa).

22–23 (KN) contacts phosphoenolpyruvate. R93 contributes to the UDP-N-acetyl-alpha-D-glucosamine binding site. The active-site Proton donor is the C117. C117 bears the 2-(S-cysteinyl)pyruvic acid O-phosphothioketal mark. Residues D307 and I329 each coordinate UDP-N-acetyl-alpha-D-glucosamine.

The protein belongs to the EPSP synthase family. MurA subfamily.

The protein resides in the cytoplasm. It catalyses the reaction phosphoenolpyruvate + UDP-N-acetyl-alpha-D-glucosamine = UDP-N-acetyl-3-O-(1-carboxyvinyl)-alpha-D-glucosamine + phosphate. The protein operates within cell wall biogenesis; peptidoglycan biosynthesis. Cell wall formation. Adds enolpyruvyl to UDP-N-acetylglucosamine. This chain is UDP-N-acetylglucosamine 1-carboxyvinyltransferase, found in Shewanella sp. (strain ANA-3).